Reading from the N-terminus, the 202-residue chain is Alpha-1-acid glycoprotein (202 aa).

The N-terminal stretch at 1–18 is a signal peptide; that stretch reads MALLWALAVLSHLPLLDA. Asn-34, Asn-57, Asn-94, Asn-104, and Asn-136 each carry an N-linked (GlcNAc...) asparagine glycan. Residues Cys-91 and Cys-184 are joined by a disulfide bond.

It belongs to the calycin superfamily. Lipocalin family.

It localises to the secreted. Its function is as follows. Functions as a transport protein in the blood stream. Binds various ligands in the interior of its beta-barrel domain. Appears to function in modulating the activity of the immune system during the acute-phase reaction. This Bos taurus (Bovine) protein is Alpha-1-acid glycoprotein (ORM1).